Reading from the N-terminus, the 140-residue chain is FLYWCH family member 2 (140 aa).

Disordered regions lie at residues 1–39 (MPLP…PREF) and 83–140 (THPE…GKSL). Residue Ser21 is modified to Phosphoserine. Positions 98–114 (PEQKRSRQDPGADRTED) are enriched in basic and acidic residues. The segment covering 118-127 (AAGPPEAAGE) has biased composition (low complexity).

This chain is FLYWCH family member 2 (FLYWCH2), found in Pongo abelii (Sumatran orangutan).